The chain runs to 304 residues: Protease HtpX homolog (304 aa).

2 helical membrane passes run 14-34 and 39-59; these read IFII…IGII and YLNG…IMVM. His144 contacts Zn(2+). Glu145 is an active-site residue. His148 lines the Zn(2+) pocket. A run of 2 helical transmembrane segments spans residues 159 to 179 and 202 to 222; these read IAIA…RMIF and AIIY…ATAI. Position 231 (Glu231) interacts with Zn(2+).

This sequence belongs to the peptidase M48B family. Requires Zn(2+) as cofactor.

It is found in the cell membrane. In Listeria monocytogenes serovar 1/2a (strain ATCC BAA-679 / EGD-e), this protein is Protease HtpX homolog.